Here is a 165-residue protein sequence, read N- to C-terminus: Large ribosomal subunit protein uL10 (165 aa).

The protein belongs to the universal ribosomal protein uL10 family. Part of the ribosomal stalk of the 50S ribosomal subunit. The N-terminus interacts with L11 and the large rRNA to form the base of the stalk. The C-terminus forms an elongated spine to which L12 dimers bind in a sequential fashion forming a multimeric L10(L12)X complex.

Its function is as follows. Forms part of the ribosomal stalk, playing a central role in the interaction of the ribosome with GTP-bound translation factors. The chain is Large ribosomal subunit protein uL10 from Pectobacterium carotovorum subsp. carotovorum (strain PC1).